A 384-amino-acid chain; its full sequence is MSAAIRENELLIRACILYESLDDKPIAESYKNFCRKVGKDIMTLHDFDYWFYRFHNGNHDLYHDRSKDPKPKSLSDFPIGVMYDVLGHVDPFERLVLRKVSRNLRDVVQKMRCELDALYVNKENTCISIGFGQGTITYSQVDNGCQVDQWKSSSGYKKKFVEGGDFMELFNTDFRTLLENKKVILNSFDVHHYLLARNGTNEEQFLDHLIEIIKSSNKFTTRSFGIGDLSFDKIARFLELMEPKSLEKLEIGNIIGSTDYDHLVNTEQWKTLKHFISECVEISIPIDHLLHFTTMKVDLTELTVHDALKIRDMLDTSETFDYAMIYVKMTDPIEVARVFNPEYNNDDNQNRLFYYTNPGNKKFAIGSSKSMLSISDLASDYFAD.

The F-box domain occupies 71 to 122; that stretch reads PKSLSDFPIGVMYDVLGHVDPFERLVLRKVSRNLRDVVQKMRCELDALYVNK.

Belongs to the FTH family.

In Caenorhabditis elegans, this protein is F-box A protein 224 (fbxa-224).